We begin with the raw amino-acid sequence, 282 residues long: 2-dehydro-3-deoxyphosphooctonate aldolase (282 aa).

This sequence belongs to the KdsA family.

It localises to the cytoplasm. The enzyme catalyses D-arabinose 5-phosphate + phosphoenolpyruvate + H2O = 3-deoxy-alpha-D-manno-2-octulosonate-8-phosphate + phosphate. It participates in carbohydrate biosynthesis; 3-deoxy-D-manno-octulosonate biosynthesis; 3-deoxy-D-manno-octulosonate from D-ribulose 5-phosphate: step 2/3. It functions in the pathway bacterial outer membrane biogenesis; lipopolysaccharide biosynthesis. This is 2-dehydro-3-deoxyphosphooctonate aldolase from Shewanella sediminis (strain HAW-EB3).